The following is a 465-amino-acid chain: Iron-sulfur cluster assembly SufBD family protein SERP0500 (465 aa).

It belongs to the iron-sulfur cluster assembly SufBD family.

The protein is Iron-sulfur cluster assembly SufBD family protein SERP0500 of Staphylococcus epidermidis (strain ATCC 35984 / DSM 28319 / BCRC 17069 / CCUG 31568 / BM 3577 / RP62A).